We begin with the raw amino-acid sequence, 490 residues long: Dipeptide and tripeptide permease A (490 aa).

Topologically, residues 1 to 34 are cytoplasmic; it reads MSNANNNQPENVSLNAFKQPRAFYLIFSIELWER. A helical transmembrane segment spans residues 35–55; it reads FGYYGLQGIMAVYLVKMLGMT. Residues 56–59 are Periplasmic-facing; that stretch reads EADS. The helical transmembrane segment at 60 to 80 threads the bilayer; the sequence is ITLFSSFSALVYGFVAIGGWL. At 81–89 the chain is on the cytoplasmic side; the sequence is GDKVLGAKR. The chain crosses the membrane as a helical span at residues 90-110; it reads VIMLGALVLAIGYAFVAYSGH. A topological domain (periplasmic) is located at residue aspartate 111. Residues 112–132 traverse the membrane as a helical segment; it reads LSLVYVGMATIAVGNGLFKAN. Over 133 to 153 the chain is Cytoplasmic; it reads PSSLLSTCYEKNDPRLDGAFT. The chain crosses the membrane as a helical span at residues 154–174; the sequence is MYYMSVNIGSFFSMLATPWLA. Residues 175-176 lie on the Periplasmic side of the membrane; that stretch reads AR. Residues 177 to 197 form a helical membrane-spanning segment; that stretch reads FGWSVAFSLSVVGMLITLVNF. Over 198–217 the chain is Cytoplasmic; that stretch reads MMCRRWVKDQGSKPDFAPLQ. A helical membrane pass occupies residues 218–238; it reads VGKLMMTLVGVVILVAISTWL. At 239 to 246 the chain is on the periplasmic side; the sequence is LHNQTIAR. The chain crosses the membrane as a helical span at residues 247–267; the sequence is WALAIISAGIILIFAKETFAL. The Cytoplasmic portion of the chain corresponds to 268 to 274; that stretch reads QGGARRK. The helical transmembrane segment at 275 to 295 threads the bilayer; it reads MIVAFLLMLEAVVFFVLYSQM. The Periplasmic portion of the chain corresponds to 296 to 320; that stretch reads PTSLNFFAIHNVEHSIFGIAFEPEQ. The chain crosses the membrane as a helical span at residues 321–341; that stretch reads YQALNPFWIMVASPILAAIYN. The Cytoplasmic segment spans residues 342–352; the sequence is KMGDRLPMPHK. A helical transmembrane segment spans residues 353–373; it reads FAIGMVLCSGAFLVLPWGASF. The Periplasmic portion of the chain corresponds to 374–383; sequence ANEAGIVSVN. A helical transmembrane segment spans residues 384–404; it reads WLILSYALQSIGELMISGLGL. The Cytoplasmic portion of the chain corresponds to 405–414; sequence AMVAQLVPQR. Residues 415–435 form a helical membrane-spanning segment; it reads LMGFIMGSWFLTTAAAALIAG. At 436–460 the chain is on the periplasmic side; the sequence is KVAALTAVPGGEVADPHASLAIYSH. The chain crosses the membrane as a helical span at residues 461-481; the sequence is VFMQIGLATAVIAVLMLLTAP. Residues 482-490 lie on the Cytoplasmic side of the membrane; that stretch reads KLNRMTLGD.

It belongs to the major facilitator superfamily. Proton-dependent oligopeptide transporter (POT/PTR) (TC 2.A.17) family. DtpA subfamily.

Its subcellular location is the cell inner membrane. In terms of biological role, proton-dependent permease that transports di- and tripeptides. The chain is Dipeptide and tripeptide permease A from Edwardsiella piscicida.